Here is a 131-residue protein sequence, read N- to C-terminus: ALADTALRQCLPCGPGNRGRCFGPGICCGVELGGCYVGTAETRRCAEEDYLPSPCQPGGQPCGSGGRCAADGVCCSADTCAADASCLEEGSERAEEAAEKNLTVLDGSAGDLLLRLMQLAGRQQGRQPGLL.

7 cysteine pairs are disulfide-bonded: Cys10–Cys55, Cys13–Cys27, Cys21–Cys45, Cys28–Cys35, Cys62–Cys74, Cys68–Cys86, and Cys75–Cys80.

Belongs to the vasopressin/oxytocin family.

The protein localises to the secreted. Functionally, neurophysin 2 specifically binds vasopressin. The chain is Neurophysin 2 from Anser anser anser (Western greylag goose).